The chain runs to 216 residues: Probable chemoreceptor glutamine deamidase CheD (216 aa).

This sequence belongs to the CheD family.

It catalyses the reaction L-glutaminyl-[protein] + H2O = L-glutamyl-[protein] + NH4(+). Probably deamidates glutamine residues to glutamate on methyl-accepting chemotaxis receptors (MCPs), playing an important role in chemotaxis. The protein is Probable chemoreceptor glutamine deamidase CheD of Halorhodospira halophila (strain DSM 244 / SL1) (Ectothiorhodospira halophila (strain DSM 244 / SL1)).